Here is a 179-residue protein sequence, read N- to C-terminus: Large ribosomal subunit protein bL17 (179 aa).

Residues 123-179 (RTRGTDTLPDTVTDTGPDSAPDPVPGSEPGSAAGDLPDADTAPADPGESSSNQRVIR) form a disordered region. Residues 154-168 (AAGDLPDADTAPADP) are compositionally biased toward low complexity. Polar residues predominate over residues 170 to 179 (ESSSNQRVIR).

The protein belongs to the bacterial ribosomal protein bL17 family. In terms of assembly, part of the 50S ribosomal subunit. Contacts protein L32.

This chain is Large ribosomal subunit protein bL17, found in Tropheryma whipplei (strain Twist) (Whipple's bacillus).